A 203-amino-acid polypeptide reads, in one-letter code: SPbeta prophage-derived uncharacterized lipoprotein YonS (203 aa).

The N-terminal stretch at 1–21 (MKLFKKLGILLLITSLILLAA) is a signal peptide. C22 carries the N-palmitoyl cysteine lipid modification. C22 is lipidated: S-diacylglycerol cysteine. The span at 27–46 (ESSSSSEDTNNATDTNTSES) shows a compositional bias: low complexity. Residues 27 to 57 (ESSSSSEDTNNATDTNTSESQDISVNGPEKV) form a disordered region.

It is found in the cell membrane. The protein is SPbeta prophage-derived uncharacterized lipoprotein YonS (yonS) of Bacillus subtilis (strain 168).